Reading from the N-terminus, the 137-residue chain is Basic phospholipase A2 2 (137 aa).

Positions 1–11 (LVAVCVSLLGA) are cleaved as a signal peptide. A propeptide spanning residues 12–19 (ANIPPQPL) is cleaved from the precursor. Disulfide bonds link Cys-30-Cys-89, Cys-44-Cys-136, Cys-46-Cys-62, Cys-61-Cys-117, Cys-68-Cys-110, Cys-78-Cys-103, and Cys-96-Cys-108. 2 residues coordinate Ca(2+): Tyr-45 and Gly-47. Tyr-48 serves as a coordination point for alpha-D-mannopyranose. Ca(2+) is bound at residue Gly-49. Residue His-65 is part of the active site. Asp-66 contacts Ca(2+). An alpha-D-mannopyranose-binding site is contributed by Asp-66. Residue Asp-111 is part of the active site.

The protein belongs to the phospholipase A2 family. Group I subfamily. D49 sub-subfamily. In terms of assembly, homodimer; non-covalently linked. It depends on Ca(2+) as a cofactor. Homodimerization and interaction of the catalytically important Asp-49 (here Asp-111) with mannose molecules may render this protein inactive. As to expression, expressed by the venom gland.

Its subcellular location is the secreted. It catalyses the reaction a 1,2-diacyl-sn-glycero-3-phosphocholine + H2O = a 1-acyl-sn-glycero-3-phosphocholine + a fatty acid + H(+). Functionally, snake venom phospholipase A2 (PLA2) that shows anticoagulant and neurotoxic activities. Its function is as follows. PLA2 catalyzes the calcium-dependent hydrolysis of the 2-acyl groups in 3-sn-phosphoglycerides. This chain is Basic phospholipase A2 2, found in Bungarus caeruleus (Indian krait).